The primary structure comprises 881 residues: Plakophilin-2 (881 aa).

The required for interaction with influenza A virus RNA polymerase subunit PB1 stretch occupies residues 1 to 348 (MAAPGAPAEY…FTDSQLGNAD (348 aa)). Residues 1 to 360 (MAAPGAPAEY…MTLERAVSML (360 aa)) form a required for binding to single-stranded DNA region. Ser-44 is subject to Phosphoserine. Residue Arg-46 is modified to Omega-N-methylarginine. Position 82 is a phosphoserine; by MARK3 (Ser-82). 7 positions are modified to phosphoserine: Ser-132, Ser-135, Ser-151, Ser-154, Ser-155, Ser-169, and Ser-172. Phosphothreonine is present on Thr-177. 5 positions are modified to phosphoserine: Ser-183, Ser-197, Ser-251, Ser-294, and Ser-329. The tract at residues 282–314 (QNRASRSSWHQSSFHSTRTLREAGPSVAVDSSG) is disordered. Residues 286 to 297 (SRSSWHQSSFHS) show a composition bias toward low complexity. ARM repeat units lie at residues 341–383 (DSQL…ECFQ), 385–424 (SEAR…NLVF), 427–467 (NDNK…NLRS), 571–616 (DGRK…NLSY), 671–711 (PKGV…NLTA), 719–758 (SVAQ…NLSR), 763–804 (QNEI…NIIQ), and 807–849 (YQNA…SLWA).

The protein belongs to the beta-catenin family. As to quaternary structure, interacts with DSC2. Interacts with JUP. Interacts with KRT5/CK5, KRT8/CK8, KRT14/CK14, KRT18/CK18 and VIM. Interacts (via N-terminus) with MARK3/C-TAK1. Interacts with DSP. Interacts with DSG1, DSG2 and DSG3. Interacts (via N-terminus) with CTNNB1. Interacts with CDH1. Interacts with the RNA polymerase III (Pol III) complex proteins POLR3A/RPC155, POLR3F/RPC39 and POLR3C/RPC82. Interacts with CTNNA3. Interacts (via N-terminus) with SCN5A/Nav1.5. Interacts with ANK3/ANKG and GJA1/CX43. (Microbial infection) Interacts (via N-terminus) with influenza A virus RNA polymerase subunit PB1 (via C-terminus); the interaction competitively inhibits the interaction between the subunits PB1 and PB2. In terms of tissue distribution, expressed at intercalated disks in the heart (at protein level). Expressed in gingival epithelial, endothelial and fibroblast cells (at protein level). Faintly expressed in tracheal epithelial cells (at protein level). Widely expressed. Found at desmosomal plaques in simple and stratified epithelia and in non-epithelial tissues such as myocardium and lymph node follicles. In most stratified epithelia found in the desmosomes of the basal cell layer and seems to be absent from suprabasal strata. (Microbial infection) Abundantly expressed in tracheal epithelial cells following influenza A virus infection (at protein level).

The protein localises to the nucleus. It is found in the cell junction. It localises to the desmosome. Its subcellular location is the cytoplasm. Functionally, a component of desmosome cell-cell junctions which are required for positive regulation of cellular adhesion. Regulates focal adhesion turnover resulting in changes in focal adhesion size, cell adhesion and cell spreading, potentially via transcriptional modulation of beta-integrins. Required to maintain gingival epithelial barrier function. Important component of the desmosome that is also required for localization of desmosome component proteins such as DSC2, DSG2 and JUP to the desmosome cell-cell junction. Required for the formation of desmosome cell junctions in cardiomyocytes, thereby required for the correct formation of the heart, specifically trabeculation and formation of the atria walls. Loss of desmosome cell junctions leads to mis-localization of DSP and DSG2 resulting in disruption of cell-cell adhesion and disordered intermediate filaments. Modulates profibrotic gene expression in cardiomyocytes via regulation of DSP expression and subsequent activation of downstream TGFB1 and MAPK14/p38 MAPK signaling. Required for cardiac sodium current propagation and electrical synchrony in cardiac myocytes, via ANK3 stabilization and modulation of SCN5A/Nav1.5 localization to cell-cell junctions. Required for mitochondrial function, nuclear envelope integrity and positive regulation of SIRT3 transcription via maintaining DES localization at its nuclear envelope and cell tip anchoring points, and thereby preserving regulation of the transcriptional program. Maintenance of nuclear envelope integrity protects against DNA damage and transcriptional dysregulation of genes, especially those involved in the electron transport chain, thereby preserving mitochondrial function and protecting against superoxide radical anion generation. Binds single-stranded DNA (ssDNA). May regulate the localization of GJA1 to gap junctions in intercalated disks of the heart. Involved in the inhibition of viral infection by influenza A viruses (IAV). Acts as a host restriction factor for IAV viral propagation, potentially via disrupting the interaction of IAV polymerase complex proteins. The protein is Plakophilin-2 of Homo sapiens (Human).